A 120-amino-acid chain; its full sequence is Ribosome-binding factor A (120 aa).

This sequence belongs to the RbfA family. In terms of assembly, monomer. Binds 30S ribosomal subunits, but not 50S ribosomal subunits or 70S ribosomes.

It is found in the cytoplasm. Its function is as follows. One of several proteins that assist in the late maturation steps of the functional core of the 30S ribosomal subunit. Associates with free 30S ribosomal subunits (but not with 30S subunits that are part of 70S ribosomes or polysomes). Required for efficient processing of 16S rRNA. May interact with the 5'-terminal helix region of 16S rRNA. The sequence is that of Ribosome-binding factor A from Borreliella burgdorferi (strain ATCC 35210 / DSM 4680 / CIP 102532 / B31) (Borrelia burgdorferi).